Reading from the N-terminus, the 330-residue chain is Olfactory receptor 11H6 (330 aa).

Residues 1-43 (MFFIIHSLVTSVFLTALGPQNRTMHFVTEFVLLGFHGQREMQS) are Extracellular-facing. Residue Asn-21 is glycosylated (N-linked (GlcNAc...) asparagine). The helical transmembrane segment at 44–64 (CFFSFILVLYLLTLLGNGAIV) threads the bilayer. The Cytoplasmic segment spans residues 65-72 (CAVKLDRR). A helical transmembrane segment spans residues 73-93 (LHTPMYILLGNFAFLEIWYIS). At 94–117 (STVPNMLVNILSEIKTISFSGCFL) the chain is on the extracellular side. A disulfide bridge links Cys-115 with Cys-207. A helical transmembrane segment spans residues 118–138 (QFYFFFSLGTTECFFLSVMAY). Residues 139 to 157 (DRYLAICRPLHYPSIMTGK) lie on the Cytoplasmic side of the membrane. Residues 158–178 (FCIILVCVCWVGGFLCYPVPI) traverse the membrane as a helical segment. Residues 179–215 (VLISQLPFCGPNIIDHLVCDPGPLFALACISAPSTEL) lie on the Extracellular side of the membrane. A helical membrane pass occupies residues 216 to 235 (ICYTFNSMIIFGPFLSILGS). Residues 236–255 (YTLVIRAVLCIPSGAGRTKA) are Cytoplasmic-facing. The chain crosses the membrane as a helical span at residues 256–276 (FSTCGSHLMVVSLFYGTLMVM). The Extracellular portion of the chain corresponds to 277–289 (YVSPTSGNPAGMQ). The helical transmembrane segment at 290-310 (KIITLVYTAMTPFLNPLIYSL) threads the bilayer. At 311-330 (RNKDMKDALKRVLGLTVSQN) the chain is on the cytoplasmic side.

This sequence belongs to the G-protein coupled receptor 1 family.

Its subcellular location is the cell membrane. In terms of biological role, odorant receptor. This chain is Olfactory receptor 11H6 (OR11H6), found in Homo sapiens (Human).